Reading from the N-terminus, the 159-residue chain is Ribosomal RNA large subunit methyltransferase H (159 aa).

Residues L76, G108, and 127 to 132 (FSKMTF) contribute to the S-adenosyl-L-methionine site.

Belongs to the RNA methyltransferase RlmH family. Homodimer.

It is found in the cytoplasm. It catalyses the reaction pseudouridine(1915) in 23S rRNA + S-adenosyl-L-methionine = N(3)-methylpseudouridine(1915) in 23S rRNA + S-adenosyl-L-homocysteine + H(+). In terms of biological role, specifically methylates the pseudouridine at position 1915 (m3Psi1915) in 23S rRNA. The chain is Ribosomal RNA large subunit methyltransferase H from Staphylococcus aureus (strain Mu3 / ATCC 700698).